Consider the following 240-residue polypeptide: Uridylate kinase (240 aa).

13-16 (KASG) contributes to the ATP binding site. The interval 21–26 (GAQGFG) is involved in allosteric activation by GTP. Glycine 55 lines the UMP pocket. The ATP site is built by glycine 56 and arginine 60. UMP contacts are provided by residues aspartate 75 and 136–143 (TGNPFFTT). Residues threonine 163, glutamine 164, tyrosine 169, and aspartate 172 each contribute to the ATP site.

Belongs to the UMP kinase family. In terms of assembly, homohexamer.

The protein localises to the cytoplasm. It carries out the reaction UMP + ATP = UDP + ADP. It functions in the pathway pyrimidine metabolism; CTP biosynthesis via de novo pathway; UDP from UMP (UMPK route): step 1/1. Allosterically activated by GTP. Inhibited by UTP. Its function is as follows. Catalyzes the reversible phosphorylation of UMP to UDP. The sequence is that of Uridylate kinase from Rhizobium etli (strain ATCC 51251 / DSM 11541 / JCM 21823 / NBRC 15573 / CFN 42).